We begin with the raw amino-acid sequence, 143 residues long: Peptide methionine sulfoxide reductase MsrB (143 aa).

In terms of domain architecture, MsrB spans 16–139 (DAELRRRLTP…NSAALNFEAK (124 aa)). Zn(2+)-binding residues include C55, C58, C104, and C107. Catalysis depends on C128, which acts as the Nucleophile.

Belongs to the MsrB Met sulfoxide reductase family. The cofactor is Zn(2+).

It carries out the reaction L-methionyl-[protein] + [thioredoxin]-disulfide + H2O = L-methionyl-(R)-S-oxide-[protein] + [thioredoxin]-dithiol. The protein is Peptide methionine sulfoxide reductase MsrB of Burkholderia mallei (strain NCTC 10229).